The primary structure comprises 156 residues: Ribosome maturation factor RimP (156 aa).

This sequence belongs to the RimP family.

It localises to the cytoplasm. In terms of biological role, required for maturation of 30S ribosomal subunits. The protein is Ribosome maturation factor RimP of Fusobacterium nucleatum subsp. nucleatum (strain ATCC 25586 / DSM 15643 / BCRC 10681 / CIP 101130 / JCM 8532 / KCTC 2640 / LMG 13131 / VPI 4355).